We begin with the raw amino-acid sequence, 162 residues long: Peptidyl-prolyl cis-trans isomerase (162 aa).

At Ser-2 the chain carries N-acetylserine. Positions 5 to 161 constitute a PPIase cyclophilin-type domain; sequence YFDVEADGQP…ARIVVAKSGE (157 aa). Residues Lys-29 and Lys-42 each participate in a glycyl lysine isopeptide (Lys-Gly) (interchain with G-Cter in ubiquitin) cross-link. Thr-71 bears the Phosphothreonine mark. Glycyl lysine isopeptide (Lys-Gly) (interchain with G-Cter in ubiquitin) cross-links involve residues Lys-123 and Lys-139. Phosphoserine is present on residues Ser-142 and Ser-145. Residues Lys-151 and Lys-158 each participate in a glycyl lysine isopeptide (Lys-Gly) (interchain with G-Cter in ubiquitin) cross-link.

It belongs to the cyclophilin-type PPIase family. PPIase A subfamily. In terms of assembly, interacts with a complex composed of SIN3 and RPD3. Identified in the Set3C complex with HOS2, HST1, SNT1, SIF2, HOS4/YIL112W and SET3.

The protein resides in the cytoplasm. It localises to the nucleus. Its subcellular location is the mitochondrion intermembrane space. It catalyses the reaction [protein]-peptidylproline (omega=180) = [protein]-peptidylproline (omega=0). Its activity is regulated as follows. Binds cyclosporin A (CsA). CsA mediates some of its effects via an inhibitory action on PPIase. PPIases accelerate the folding of proteins. It catalyzes the cis-trans isomerization of proline imidic peptide bonds in oligopeptides. Involved in histone deacetylase complexes, suggesting a function in chromatin. Imports fructose-1,6-bisphosphatase (FBPase) into the intermediate vacuole import and degradation (Vid) vesicles. Regulates the meiotic gene program via the Set3C histone deacetylase complex to promote efficient sporulation, and the prolyl-isomerase activity is required for this function. The protein is Peptidyl-prolyl cis-trans isomerase (CPR1) of Saccharomyces cerevisiae (strain ATCC 204508 / S288c) (Baker's yeast).